The following is a 200-amino-acid chain: MSTISFTIFILANVWLLVVTTSIAQFVIDTSGEPVENDEDYFIRPAITGNGGSLTLVTRNSCPFNVGLDPDAPQGFAVLLSPFVSNREEDEVRLGRDLRVIFQAGTSCGQSTEWRLGERDATTGRRFIITGRDDSTVGSYGNFFRIVQTPSRGIFNIQWCPTEVCPSCKFECGTVGIVRENGKILLALDGSALPVAFQKE.

An N-terminal signal peptide occupies residues Met1 to Ala24. 3 cysteine pairs are disulfide-bonded: Cys62–Cys108, Cys160–Cys172, and Cys165–Cys168.

It belongs to the protease inhibitor I3 (leguminous Kunitz-type inhibitor) family. As to quaternary structure, interacts with SCP1.

It is found in the secreted. The protein resides in the extracellular space. It localises to the apoplast. The sequence is that of Kunitz type trypsin inhibitor 111 (KPI111) from Medicago truncatula (Barrel medic).